Reading from the N-terminus, the 328-residue chain is GTP 3',8-cyclase (328 aa).

The 229-residue stretch at 1–229 (MNQVDYLRIS…DAQVRGAGPA (229 aa)) folds into the Radical SAM core domain. A GTP-binding site is contributed by Arg8. [4Fe-4S] cluster contacts are provided by Cys15 and Cys19. Tyr21 contributes to the S-adenosyl-L-methionine binding site. Cys22 is a binding site for [4Fe-4S] cluster. GTP is bound at residue Arg60. Gly64 is a binding site for S-adenosyl-L-methionine. Thr91 provides a ligand contact to GTP. Ser115 is a binding site for S-adenosyl-L-methionine. Residue Lys155 participates in GTP binding. Met189 serves as a coordination point for S-adenosyl-L-methionine. [4Fe-4S] cluster-binding residues include Cys252 and Cys255. 257-259 (RMR) is a binding site for GTP. A [4Fe-4S] cluster-binding site is contributed by Cys269.

The protein belongs to the radical SAM superfamily. MoaA family. Monomer and homodimer. [4Fe-4S] cluster serves as cofactor.

The catalysed reaction is GTP + AH2 + S-adenosyl-L-methionine = (8S)-3',8-cyclo-7,8-dihydroguanosine 5'-triphosphate + 5'-deoxyadenosine + L-methionine + A + H(+). It functions in the pathway cofactor biosynthesis; molybdopterin biosynthesis. In terms of biological role, catalyzes the cyclization of GTP to (8S)-3',8-cyclo-7,8-dihydroguanosine 5'-triphosphate. The protein is GTP 3',8-cyclase of Nostoc sp. (strain PCC 7120 / SAG 25.82 / UTEX 2576).